Reading from the N-terminus, the 264-residue chain is Acyl-[acyl-carrier-protein]--UDP-N-acetylglucosamine O-acyltransferase (264 aa).

It belongs to the transferase hexapeptide repeat family. LpxA subfamily. In terms of assembly, homotrimer.

Its subcellular location is the cytoplasm. The enzyme catalyses a (3R)-hydroxyacyl-[ACP] + UDP-N-acetyl-alpha-D-glucosamine = a UDP-3-O-[(3R)-3-hydroxyacyl]-N-acetyl-alpha-D-glucosamine + holo-[ACP]. Its pathway is glycolipid biosynthesis; lipid IV(A) biosynthesis; lipid IV(A) from (3R)-3-hydroxytetradecanoyl-[acyl-carrier-protein] and UDP-N-acetyl-alpha-D-glucosamine: step 1/6. Its function is as follows. Involved in the biosynthesis of lipid A, a phosphorylated glycolipid that anchors the lipopolysaccharide to the outer membrane of the cell. The polypeptide is Acyl-[acyl-carrier-protein]--UDP-N-acetylglucosamine O-acyltransferase (Chlorobaculum tepidum (strain ATCC 49652 / DSM 12025 / NBRC 103806 / TLS) (Chlorobium tepidum)).